Consider the following 246-residue polypeptide: Probable transcriptional regulatory protein CA_C2295 (246 aa).

Belongs to the TACO1 family.

Its subcellular location is the cytoplasm. The chain is Probable transcriptional regulatory protein CA_C2295 from Clostridium acetobutylicum (strain ATCC 824 / DSM 792 / JCM 1419 / IAM 19013 / LMG 5710 / NBRC 13948 / NRRL B-527 / VKM B-1787 / 2291 / W).